Here is a 115-residue protein sequence, read N- to C-terminus: Ig kappa chain V region 3315 (115 aa).

The segment at 1 to 24 (AQIVMTQTPSSVSAAVGGTVTINC) is framework-1. The segment at 25 to 37 (QSSQSVYENGRLS) is complementarity-determining-1. The tract at residues 38–52 (WFQQKPGQPPKRLIY) is framework-2. The tract at residues 53–59 (RASTLAS) is complementarity-determining-2. Positions 60–91 (GVSSRFTGSGSGTQFTLSISDVQCDDAATYYC) are framework-3. Residues 92 to 104 (LGNYDCSSGDSFT) form a complementarity-determining-3 region. The tract at residues 105–114 (FGGGTEVVVK) is framework-4.

The protein is Ig kappa chain V region 3315 of Oryctolagus cuniculus (Rabbit).